Consider the following 263-residue polypeptide: Apolipoprotein A-I (263 aa).

The N-terminal stretch at 1–18 (MKAVVLAVAVLFLTGSQA) is a signal peptide. 2 repeat units span residues 66–87 (LKLLDNWDTLSTTFSKLRSELG) and 88–109 (PVTQEFWDNLEKDTEWLRQEMN). The interval 66-263 (LKLLDNWDTL…DEVSKKLSAQ (198 aa)) is 10 X approximate tandem repeats. A Methionine sulfoxide modification is found at Met-108. One copy of the 3; half-length repeat lies at 110–120 (KDLVEVKEKVQ). 5 tandem repeats follow at residues 121–142 (PYLKNFQEKVQLELEHYRKKVE), 143–164 (PLGTDLRDGARQKLQELQEKLT), 165–186 (PLGEDLRDRARQHVDELRAQLG), 187–206 (PYSDQMRQRLTQRLEALKDS), and 207–228 (ASLAEYQAKAQEHLKTFSEKAK). Residues 229-239 (PALEDLRLGLL) form a 9; half-length repeat. Repeat 10 spans residues 240 to 263 (PVLESLKASFLSSIDEVSKKLSAQ).

Belongs to the apolipoprotein A1/A4/E family. Homodimer. Interacts with APOA1BP and CLU. Component of a sperm activating protein complex (SPAP), consisting of APOA1, an immunoglobulin heavy chain, an immunoglobulin light chain and albumin. Interacts with NDRG1. Interacts with SCGB3A2. Interacts with NAXE and YJEFN3. Post-translationally, glycosylated. In terms of processing, palmitoylated. Phosphorylation sites are present in the extracellular medium.

The protein resides in the secreted. Functionally, participates in the reverse transport of cholesterol from tissues to the liver for excretion by promoting cholesterol efflux from tissues and by acting as a cofactor for the lecithin cholesterol acyltransferase (LCAT). As part of the SPAP complex, activates spermatozoa motility. The protein is Apolipoprotein A-I (APOA1) of Octodon degus (Degu).